Reading from the N-terminus, the 242-residue chain is Large ribosomal subunit protein uL1 (242 aa).

Belongs to the universal ribosomal protein uL1 family. Part of the 50S ribosomal subunit.

In terms of biological role, binds directly to 23S rRNA. The L1 stalk is quite mobile in the ribosome, and is involved in E site tRNA release. Protein L1 is also a translational repressor protein, it controls the translation of the L11 operon by binding to its mRNA. In Dictyoglomus thermophilum (strain ATCC 35947 / DSM 3960 / H-6-12), this protein is Large ribosomal subunit protein uL1.